Here is a 49-residue protein sequence, read N- to C-terminus: Large ribosomal subunit protein bL33 (49 aa).

This sequence belongs to the bacterial ribosomal protein bL33 family.

In Syntrophobacter fumaroxidans (strain DSM 10017 / MPOB), this protein is Large ribosomal subunit protein bL33.